The primary structure comprises 180 residues: Acireductone dioxygenase (180 aa).

Fe(2+) contacts are provided by His-99, His-101, Glu-105, and His-145. Ni(2+) contacts are provided by His-99, His-101, Glu-105, and His-145.

Belongs to the acireductone dioxygenase (ARD) family. As to quaternary structure, monomer. Requires Fe(2+) as cofactor. Ni(2+) serves as cofactor.

The catalysed reaction is 1,2-dihydroxy-5-(methylsulfanyl)pent-1-en-3-one + O2 = 3-(methylsulfanyl)propanoate + CO + formate + 2 H(+). It carries out the reaction 1,2-dihydroxy-5-(methylsulfanyl)pent-1-en-3-one + O2 = 4-methylsulfanyl-2-oxobutanoate + formate + 2 H(+). It functions in the pathway amino-acid biosynthesis; L-methionine biosynthesis via salvage pathway; L-methionine from S-methyl-5-thio-alpha-D-ribose 1-phosphate: step 5/6. In terms of biological role, catalyzes 2 different reactions between oxygen and the acireductone 1,2-dihydroxy-3-keto-5-methylthiopentene (DHK-MTPene) depending upon the metal bound in the active site. Fe-containing acireductone dioxygenase (Fe-ARD) produces formate and 2-keto-4-methylthiobutyrate (KMTB), the alpha-ketoacid precursor of methionine in the methionine recycle pathway. Ni-containing acireductone dioxygenase (Ni-ARD) produces methylthiopropionate, carbon monoxide and formate, and does not lie on the methionine recycle pathway. In Geobacillus thermodenitrificans (strain NG80-2), this protein is Acireductone dioxygenase.